Consider the following 333-residue polypeptide: Secreted mono- and diacylglycerol lipase 1 (333 aa).

A signal peptide spans 1–16 (MMLILSILSIIAFAAA). Disulfide bonds link Cys-56–Cys-268 and Cys-276–Cys-298. Catalysis depends on Ser-176, which acts as the Nucleophile. Residues Asp-230 and His-288 contribute to the active site.

The protein belongs to the AB hydrolase superfamily. Lipase family. Class 3 subfamily.

The protein localises to the secreted. It carries out the reaction a monoacylglycerol + H2O = glycerol + a fatty acid + H(+). The catalysed reaction is a diacylglycerol + H2O = a monoacylglycerol + a fatty acid + H(+). Secreted mono- and diacylglycerol lipase that allows the use of hydrolyzed lipids as carbon source and might play a role in pathogenicity. Shows lipolytic activity towards olive oil and p-nitrophenylpalmitate. This chain is Secreted mono- and diacylglycerol lipase 1, found in Fusarium solani (Filamentous fungus).